The following is a 214-amino-acid chain: Holliday junction branch migration complex subunit RuvA (214 aa).

Residues 1–68 are domain I; the sequence is MIGFLQGKVL…QPKPVLIGFD (68 aa). The interval 69–146 is domain II; it reads SAEEKDFFQL…RFLLAADEAG (78 aa). Residues 147 to 160 form a flexible linker region; that stretch reads AGDGVSKTGTPSLP. The interval 161-214 is domain III; sequence IQKAIDQVVDVLVQQLGHTPSAAKMMVAQALDRDPEIMTPEALFDEVYKGDVDA.

Belongs to the RuvA family. Homotetramer. Forms an RuvA(8)-RuvB(12)-Holliday junction (HJ) complex. HJ DNA is sandwiched between 2 RuvA tetramers; dsDNA enters through RuvA and exits via RuvB. An RuvB hexamer assembles on each DNA strand where it exits the tetramer. Each RuvB hexamer is contacted by two RuvA subunits (via domain III) on 2 adjacent RuvB subunits; this complex drives branch migration. In the full resolvosome a probable DNA-RuvA(4)-RuvB(12)-RuvC(2) complex forms which resolves the HJ.

Its subcellular location is the cytoplasm. In terms of biological role, the RuvA-RuvB-RuvC complex processes Holliday junction (HJ) DNA during genetic recombination and DNA repair, while the RuvA-RuvB complex plays an important role in the rescue of blocked DNA replication forks via replication fork reversal (RFR). RuvA specifically binds to HJ cruciform DNA, conferring on it an open structure. The RuvB hexamer acts as an ATP-dependent pump, pulling dsDNA into and through the RuvAB complex. HJ branch migration allows RuvC to scan DNA until it finds its consensus sequence, where it cleaves and resolves the cruciform DNA. This Desulforapulum autotrophicum (strain ATCC 43914 / DSM 3382 / VKM B-1955 / HRM2) (Desulfobacterium autotrophicum) protein is Holliday junction branch migration complex subunit RuvA.